The primary structure comprises 700 residues: Centrosomal protein of 63 kDa (700 aa).

M1 bears the N-acetylmethionine mark. 2 coiled-coil regions span residues 73 to 283 and 343 to 533; these read KEVG…ETFI and LQAE…MCKK. 3 positions are modified to phosphoserine: S278, K488, and L492. The tract at residues 570–603 is disordered; sequence QYKTGHHSPRGQTLDSIDPVARGPSPLSSHISPG. The segment covering 593 to 603 has biased composition (low complexity); it reads PSPLSSHISPG.

Belongs to the CEP63 family. As to quaternary structure, interacts with CEP152 and CDK1; these interactions recruit both ligands to centrosomes. Interacts with CDK2, CDK5RAP2, WDR62, CEP90, KIAA0753/moonraker and CCDC14. CEP63, CDK5RAP2, CEP152, WDR62 are proposed to form a stepwise assembled complex at the centrosome forming a ring near parental centrioles. Interacts with CCDC57; the interaction is required for their location to proximal end of centrioles. Interacts with FXR1; promoting its stabilization. In terms of processing, polyubiquitinated via 'Lys-48'-linked ubiquitin, leading to its degradation. Deubiquitinated by USP36, promoting its stabilization.

The protein localises to the cytoplasm. It localises to the cytoskeleton. The protein resides in the microtubule organizing center. Its subcellular location is the centrosome. It is found in the centriole. The protein localises to the centriolar satellite. In terms of biological role, required for normal spindle assembly. Plays a key role in mother-centriole-dependent centriole duplication; the function also seems to involve CEP152, CDK5RAP2 and WDR62 through a stepwise assembled complex at the centrosome that recruits CDK2 required for centriole duplication. Reported to be required for centrosomal recruitment of CEP152; however, this function has been questioned. Also recruits CDK1 to centrosomes. Plays a role in DNA damage response. Following DNA damage, such as double-strand breaks (DSBs), is removed from centrosomes; this leads to the inactivation of spindle assembly and delay in mitotic progression. Promotes stabilization of FXR1 protein by inhibiting FXR1 ubiquitination. This chain is Centrosomal protein of 63 kDa, found in Mus musculus (Mouse).